The primary structure comprises 409 residues: Putative actin-fragmin kinase DDB_G0268812 (409 aa).

The tract at residues 1–45 is disordered; the sequence is MKTFRDFKKKIKNNNNNKNNKNNNINNNNSNNNKNNKNNNNNNSN. Residues 5 to 46 adopt a coiled-coil conformation; the sequence is RDFKKKIKNNNNNKNNKNNNINNNNSNNNKNNKNNNNNNSNN. Residues 13–45 show a composition bias toward low complexity; it reads NNNNNKNNKNNNINNNNSNNNKNNKNNNNNNSN.

The protein belongs to the protein kinase superfamily. AFK Ser/Thr protein kinase family.

The chain is Putative actin-fragmin kinase DDB_G0268812 from Dictyostelium discoideum (Social amoeba).